A 235-amino-acid polypeptide reads, in one-letter code: NAD(P)H-quinone oxidoreductase subunit K (235 aa).

Positions 52, 53, 117, and 148 each coordinate [4Fe-4S] cluster. Positions 216–226 are enriched in low complexity; that stretch reads AGAAVAPQLPV. The segment at 216–235 is disordered; it reads AGAAVAPQLPVTEKEGRDRA.

The protein belongs to the complex I 20 kDa subunit family. NDH-1 can be composed of about 15 different subunits; different subcomplexes with different compositions have been identified which probably have different functions. [4Fe-4S] cluster serves as cofactor.

The protein resides in the cellular thylakoid membrane. It catalyses the reaction a plastoquinone + NADH + (n+1) H(+)(in) = a plastoquinol + NAD(+) + n H(+)(out). It carries out the reaction a plastoquinone + NADPH + (n+1) H(+)(in) = a plastoquinol + NADP(+) + n H(+)(out). Functionally, NDH-1 shuttles electrons from an unknown electron donor, via FMN and iron-sulfur (Fe-S) centers, to quinones in the respiratory and/or the photosynthetic chain. The immediate electron acceptor for the enzyme in this species is believed to be plastoquinone. Couples the redox reaction to proton translocation, and thus conserves the redox energy in a proton gradient. Cyanobacterial NDH-1 also plays a role in inorganic carbon-concentration. This is NAD(P)H-quinone oxidoreductase subunit K from Synechococcus elongatus (strain ATCC 33912 / PCC 7942 / FACHB-805) (Anacystis nidulans R2).